The primary structure comprises 300 residues: NAD kinase (300 aa).

The active-site Proton acceptor is the D75. Residues D75 to G76, N149 to D150, R177, D179, T190 to S195, A214, and Q248 contribute to the NAD(+) site.

It belongs to the NAD kinase family. It depends on a divalent metal cation as a cofactor.

It localises to the cytoplasm. It catalyses the reaction NAD(+) + ATP = ADP + NADP(+) + H(+). Involved in the regulation of the intracellular balance of NAD and NADP, and is a key enzyme in the biosynthesis of NADP. Catalyzes specifically the phosphorylation on 2'-hydroxyl of the adenosine moiety of NAD to yield NADP. This is NAD kinase from Burkholderia ambifaria (strain MC40-6).